Consider the following 371-residue polypeptide: Lombricine kinase (371 aa).

One can recognise a Phosphagen kinase N-terminal domain in the interval Met-1–Gly-86. The Phosphagen kinase C-terminal domain occupies Tyr-113–Leu-355. ATP is bound by residues Ser-116–Arg-120, His-179, Arg-224, Arg-280, Arg-308–Glu-313, and Asp-323.

Belongs to the ATP:guanido phosphotransferase family. Homodimer.

It carries out the reaction L-lombricine + ATP = N-phospho-L-lombricine + ADP + H(+). This is Lombricine kinase from Eisenia fetida (Red wiggler worm).